The following is a 281-amino-acid chain: NADPH-dependent 7-cyano-7-deazaguanine reductase (281 aa).

Substrate is bound at residue 88-90 (IES). 90–91 (SK) contacts NADPH. C189 serves as the catalytic Thioimide intermediate. Residue D196 is the Proton donor of the active site. 228–229 (HE) is a substrate binding site. Position 257-258 (257-258 (RG)) interacts with NADPH.

The protein belongs to the GTP cyclohydrolase I family. QueF type 2 subfamily. As to quaternary structure, homodimer.

Its subcellular location is the cytoplasm. It catalyses the reaction 7-aminomethyl-7-carbaguanine + 2 NADP(+) = 7-cyano-7-deazaguanine + 2 NADPH + 3 H(+). The protein operates within tRNA modification; tRNA-queuosine biosynthesis. In terms of biological role, catalyzes the NADPH-dependent reduction of 7-cyano-7-deazaguanine (preQ0) to 7-aminomethyl-7-deazaguanine (preQ1). The protein is NADPH-dependent 7-cyano-7-deazaguanine reductase of Proteus mirabilis (strain HI4320).